Reading from the N-terminus, the 206-residue chain is Large ribosomal subunit protein mL62 (206 aa).

A mitochondrion-targeting transit peptide spans 1–29 (MAAARCLRWGLSRAEAWLLPPPTSCCHRA). N5-methylglutamine is present on glutamine 90.

It belongs to the prokaryotic/mitochondrial release factor family. Mitochondrion-specific ribosomal protein mL62 subfamily. Component of the mitochondrial ribosome large subunit (39S) which comprises a 16S rRNA and about 50 distinct proteins. Post-translationally, methylation of glutamine in the GGQ triplet by HEMK1.

It localises to the mitochondrion. It catalyses the reaction an N-acyl-L-alpha-aminoacyl-tRNA + H2O = an N-acyl-L-amino acid + a tRNA + H(+). In terms of biological role, essential peptidyl-tRNA hydrolase component of the mitochondrial large ribosomal subunit. Acts as a codon-independent translation release factor that has lost all stop codon specificity and directs the termination of translation in mitochondrion, possibly in case of abortive elongation. May be involved in the hydrolysis of peptidyl-tRNAs that have been prematurely terminated and thus in the recycling of stalled mitochondrial ribosomes. The polypeptide is Large ribosomal subunit protein mL62 (Bos taurus (Bovine)).